The primary structure comprises 744 residues: MASEATNIPSPVVRQIDKQFLICSICLERYKNPKVLPCLHTFCERCLQNYIPAHSLTLSCPVCRQTSILPEKGVAALQNNFFITNLMDVLQRSPGSSAEESSILETVTAVAAGKPLSCPNHDGNVMDFYCQSCETAMCRECTEGEHAEHPTVPLKDVVEQHKASLQVQLDAANRRLPEIDSALQFISEIIHQLTNQKASIVDDIHSTFDELQKTLNVRKSVLLMELEVNYGLKHKVLQSQLDTLLEGQESIKSCSNFTAQALNHGTETEVLLVKKQMSEKLNELADQDFPLHPRENDQLDFIVETEGLKKSIHNLGTILTTNAVASETVATGEGLRQTIIGQPMSVTITTKDKDGELCKTGNAYLTAELSTPDGSVADGEILDNKNGTYEFLYTVQKEGDFTLSLRLYDQHIRGSPFKLKVIRSADVSPTTEGVKRRVKSPGSGHVKQKAVKRPASMYSTGKRKENPIEDDLIFRVGTKGRNKGEFTNLQGVAASTNGKILIADSNNQCVQIFSNDGQFKSRFGIRGRSPGQLQRPTGVAVHPSGDIIIADYDNKWVSIFSSDGKFKTKIGSGKLMGPKGVSVDRNGHIIVVDNKACCVFIFQPNGKIVTRFGSRGNGDRQFAGPHFAAVNSNNEIIVTDFHNHSVKVFNQEGEFMLKFGSNGEGNGQFNAPTGVAVDSNGNIIVADWGNSRIQVFDGSGSFLSYINTSADPLYGPQGLALTSDGHVVVADSGNHCFKVYRYLQ.

Ser10 carries the post-translational modification Phosphoserine. The RING-type zinc-finger motif lies at Cys23–Arg64. The segment at Gly113–Leu154 adopts a B box-type zinc-finger fold. Residues Cys118, His121, Cys141, and His146 each contribute to the Zn(2+) site. The Filamin repeat unit spans residues Thr320–Val421. Residue Thr371 is modified to Phosphothreonine. Residues Ser375, Ser424, and Ser428 each carry the phosphoserine modification. Positions Glu432–Lys462 are disordered. 6 NHL repeats span residues Ile473–Asp516, Lys520–Asp563, Gly564–Asn605, Val609–Glu652, Met656–Ser699, and Gly700–Leu743.

This sequence belongs to the TRIM/RBCC family. In terms of assembly, forms homooligomers. Interacts with TRIM3; this interaction reduces TRIM2 activity. Interacts with myosin V; myosin V may not be a substrate for ubiquitination. Interacts with NEFL. Interacts with phosphorylated BCL2L11. Interacts with SIRPA. RING-type zinc finger-dependent and UBE2D1-dependent autoubiquitination.

The protein localises to the cytoplasm. It carries out the reaction S-ubiquitinyl-[E2 ubiquitin-conjugating enzyme]-L-cysteine + [acceptor protein]-L-lysine = [E2 ubiquitin-conjugating enzyme]-L-cysteine + N(6)-ubiquitinyl-[acceptor protein]-L-lysine.. It functions in the pathway protein modification; protein ubiquitination. In terms of biological role, UBE2D1-dependent E3 ubiquitin-protein ligase that mediates the ubiquitination of NEFL and of phosphorylated BCL2L11. Plays a neuroprotective function. May play a role in neuronal rapid ischemic tolerance. Plays a role in antiviral immunity and limits New World arenavirus infection independently of its ubiquitin ligase activity. The chain is Tripartite motif-containing protein 2 (TRIM2) from Bos taurus (Bovine).